A 175-amino-acid chain; its full sequence is Flagellar assembly factor FliW (175 aa).

It belongs to the FliW family. Interacts with translational regulator CsrA and flagellin(s).

The protein localises to the cytoplasm. Its function is as follows. Acts as an anti-CsrA protein, binds CsrA and prevents it from repressing translation of its target genes, one of which is flagellin. Binds to flagellin and participates in the assembly of the flagellum. This Bdellovibrio bacteriovorus (strain ATCC 15356 / DSM 50701 / NCIMB 9529 / HD100) protein is Flagellar assembly factor FliW.